Consider the following 125-residue polypeptide: Large ribosomal subunit protein bL12 (125 aa).

This sequence belongs to the bacterial ribosomal protein bL12 family. In terms of assembly, homodimer. Part of the ribosomal stalk of the 50S ribosomal subunit. Forms a multimeric L10(L12)X complex, where L10 forms an elongated spine to which 2 to 4 L12 dimers bind in a sequential fashion. Binds GTP-bound translation factors.

Its function is as follows. Forms part of the ribosomal stalk which helps the ribosome interact with GTP-bound translation factors. Is thus essential for accurate translation. The sequence is that of Large ribosomal subunit protein bL12 from Campylobacter jejuni (strain RM1221).